The sequence spans 192 residues: Phosphoheptose isomerase (192 aa).

In terms of domain architecture, SIS spans 35 to 192; the sequence is LIETLENQGK…CIERHFAHKN (158 aa). 50–52 provides a ligand contact to substrate; the sequence is NGG. Zn(2+)-binding residues include His-59 and Glu-63. Residues Glu-63, 92–93, 118–120, Ser-123, and Gln-170 each bind substrate; these read ND and STS. Positions 170 and 178 each coordinate Zn(2+).

Belongs to the SIS family. GmhA subfamily. Homotetramer. Zn(2+) serves as cofactor.

Its subcellular location is the cytoplasm. The enzyme catalyses 2 D-sedoheptulose 7-phosphate = D-glycero-alpha-D-manno-heptose 7-phosphate + D-glycero-beta-D-manno-heptose 7-phosphate. The protein operates within carbohydrate biosynthesis; D-glycero-D-manno-heptose 7-phosphate biosynthesis; D-glycero-alpha-D-manno-heptose 7-phosphate and D-glycero-beta-D-manno-heptose 7-phosphate from sedoheptulose 7-phosphate: step 1/1. In terms of biological role, catalyzes the isomerization of sedoheptulose 7-phosphate in D-glycero-D-manno-heptose 7-phosphate. The polypeptide is Phosphoheptose isomerase (Helicobacter pylori (strain HPAG1)).